Here is a 206-residue protein sequence, read N- to C-terminus: MSKLKQGTFITFEGGEGIGKSTQCQMLYEYLKSQNIPVILTREVGGTNVAEKMREILVHTDLLPMSELLQAMAARYDHMVKKIIPALQAGNIVICDRFIDSTACYQGLELENGIELVYNLHKDLMPPLMPDLTFFIDVESSIAIERVNSRNMSNKFDVRGLDFYNKIYDCFKGLSKKFPERIVTIKASDLNPEQVHELIKKHLNLI.

Position 14-21 (14-21 (GGEGIGKS)) interacts with ATP.

Belongs to the thymidylate kinase family.

The catalysed reaction is dTMP + ATP = dTDP + ADP. Phosphorylation of dTMP to form dTDP in both de novo and salvage pathways of dTTP synthesis. In Rickettsia bellii (strain RML369-C), this protein is Thymidylate kinase.